Consider the following 242-residue polypeptide: Zinc import ATP-binding protein ZnuC (242 aa).

The 218-residue stretch at 24-241 (INVKNLSFFY…EKFLKMFSSY (218 aa)) folds into the ABC transporter domain. 56–63 (GPNGGGKT) contributes to the ATP binding site.

The protein belongs to the ABC transporter superfamily. Zinc importer (TC 3.A.1.15.5) family. In terms of assembly, the complex is composed of two ATP-binding proteins (ZnuC), two transmembrane proteins (ZnuB) and a solute-binding protein (ZnuA).

The protein localises to the cell inner membrane. The enzyme catalyses Zn(2+)(out) + ATP(in) + H2O(in) = Zn(2+)(in) + ADP(in) + phosphate(in) + H(+)(in). In terms of biological role, part of the ABC transporter complex ZnuABC involved in zinc import. Responsible for energy coupling to the transport system. The polypeptide is Zinc import ATP-binding protein ZnuC (Ehrlichia canis (strain Jake)).